Reading from the N-terminus, the 373-residue chain is Glutamate 5-kinase (373 aa).

Residue Lys-15 participates in ATP binding. Substrate is bound by residues Ser-55, Asp-142, and Asn-154. 174–175 (TD) lines the ATP pocket. The 79-residue stretch at 281 to 359 (RGSVVLDDGA…SQIEAVLGYV (79 aa)) folds into the PUA domain.

Belongs to the glutamate 5-kinase family.

The protein localises to the cytoplasm. The enzyme catalyses L-glutamate + ATP = L-glutamyl 5-phosphate + ADP. Its pathway is amino-acid biosynthesis; L-proline biosynthesis; L-glutamate 5-semialdehyde from L-glutamate: step 1/2. Functionally, catalyzes the transfer of a phosphate group to glutamate to form L-glutamate 5-phosphate. The chain is Glutamate 5-kinase from Nitrosomonas eutropha (strain DSM 101675 / C91 / Nm57).